Consider the following 367-residue polypeptide: MAKMINKTLVLTYIYLLIYIILSSGVILYNKWVLSPKYFNFPLPITLTMIHMGFSGFVAFLLIRVFKVVSPVKMTFEIYVTCVVPISAFFASSLWFGNTAYLHISVAFIQMLKALMPVATFLMAVVCGTDKARCDVFMNMVLVSVGVVVSSYGEINFNVIGTVYQVMGIFAEALRLVLTQVLLQKKGLTLNPVTSLYYIAPCSFVFLSLPWYVLEKPNIDVSQIQFNFWIFFSNALCALALNFSIFLVIGRTGAVTIRVAGVLKDWILIALSTVIFPESTITGLNITGYAIALCGVVMYNYIKIKDVKAIQPTTDSLPDRITKDWKEKNSSDGGSPRGLELNDEEAPLITSRLSHIGRTQLGNHTAV.

A run of 10 helical transmembrane segments spans residues 9–29 (LVLTYIYLLIYIILSSGVILY), 43–63 (LPITLTMIHMGFSGFVAFLLI), 76–96 (FEIYVTCVVPISAFFASSLWF), 106–126 (VAFIQMLKALMPVATFLMAVV), 140–160 (MVLVSVGVVVSSYGEINFNVI), 163–183 (VYQVMGIFAEALRLVLTQVLL), 193–213 (VTSLYYIAPCSFVFLSLPWYV), 229–249 (WIFFSNALCALALNFSIFLVI), 257–276 (IRVAGVLKDWILIALSTVIF), and 280–302 (TITGLNITGYAIALCGVVMYNYI). The span at 321 to 330 (ITKDWKEKNS) shows a compositional bias: basic and acidic residues. A disordered region spans residues 321 to 341 (ITKDWKEKNSSDGGSPRGLEL).

Belongs to the TPT transporter family. TPT (TC 2.A.7.9) subfamily.

The protein localises to the membrane. The sequence is that of Probable sugar phosphate/phosphate translocator At1g48230 from Arabidopsis thaliana (Mouse-ear cress).